The primary structure comprises 727 residues: Polyribonucleotide nucleotidyltransferase (727 aa).

Mg(2+) contacts are provided by Asp491 and Asp497. Residues 558–617 (PRIITASIHPDKIREVIGPGGKTIKKIIDETGVKIDIEDDGRVFISAVDGEAGENALKII) form the KH domain. Residues 627–701 (GRIYNGRVTR…KQGRLNLSRK (75 aa)) form the S1 motif domain. Residues 698 to 727 (LSRKEALPNPNPSSNPNPNGITANRNPRNS) form a disordered region. Over residues 717 to 727 (GITANRNPRNS) the composition is skewed to polar residues.

Belongs to the polyribonucleotide nucleotidyltransferase family. It depends on Mg(2+) as a cofactor.

It is found in the cytoplasm. It carries out the reaction RNA(n+1) + phosphate = RNA(n) + a ribonucleoside 5'-diphosphate. In terms of biological role, involved in mRNA degradation. Catalyzes the phosphorolysis of single-stranded polyribonucleotides processively in the 3'- to 5'-direction. This chain is Polyribonucleotide nucleotidyltransferase, found in Desulfitobacterium hafniense (strain Y51).